Reading from the N-terminus, the 64-residue chain is Makatoxin-1 (64 aa).

Residues 2 to 64 form the LCN-type CS-alpha/beta domain; sequence RDAYIADSEN…VPIRISGSCR (63 aa). 4 disulfide bridges follow: Cys12–Cys63, Cys16–Cys36, Cys22–Cys46, and Cys26–Cys48.

As to expression, expressed by the venom gland.

It is found in the secreted. In terms of biological role, this protein markedly relaxes the rat carbachol-precontracted anococcygeus muscle. This relaxation is inhibited by the inhibitor of nitric oxide (NO) synthase, N-nitro-L-arginine methyl ester (L-NAME), suggesting that the response induced by this protein is NO-mediated. This Olivierus martensii (Manchurian scorpion) protein is Makatoxin-1.